A 256-amino-acid chain; its full sequence is Undecaprenyl-diphosphatase 2 (256 aa).

The next 8 membrane-spanning stretches (helical) occupy residues Met1–Ile21, Ala38–Leu58, Leu70–Phe90, Leu97–Leu117, Val134–Thr154, Ala175–Leu195, Ala208–Ile228, and Phe236–Val256.

It belongs to the UppP family.

The protein resides in the cell inner membrane. It carries out the reaction di-trans,octa-cis-undecaprenyl diphosphate + H2O = di-trans,octa-cis-undecaprenyl phosphate + phosphate + H(+). Catalyzes the dephosphorylation of undecaprenyl diphosphate (UPP). Confers resistance to bacitracin. The sequence is that of Undecaprenyl-diphosphatase 2 from Pseudoalteromonas translucida (strain TAC 125).